A 121-amino-acid chain; its full sequence is MARIAGINIPPQKHAEIGLTAIFGIGRTRARKICEACEIDYAKKIKDLTDSDLEKIRDHIAQFTIEGDLRRETTMNIKRLMDIGCYRGFRHRRGLPMRGQRTRTNARTRKGPRKAAASLKK.

The segment at 95–121 (LPMRGQRTRTNARTRKGPRKAAASLKK) is disordered.

It belongs to the universal ribosomal protein uS13 family. In terms of assembly, part of the 30S ribosomal subunit. Forms a loose heterodimer with protein S19. Forms two bridges to the 50S subunit in the 70S ribosome.

Functionally, located at the top of the head of the 30S subunit, it contacts several helices of the 16S rRNA. In the 70S ribosome it contacts the 23S rRNA (bridge B1a) and protein L5 of the 50S subunit (bridge B1b), connecting the 2 subunits; these bridges are implicated in subunit movement. Contacts the tRNAs in the A and P-sites. The polypeptide is Small ribosomal subunit protein uS13 (Polaromonas naphthalenivorans (strain CJ2)).